A 237-amino-acid polypeptide reads, in one-letter code: Ribose-5-phosphate isomerase A (237 aa).

Substrate-binding positions include 30–33, 87–90, and 100–103; these read SGST, DGAD, and KGGG. Glu109 functions as the Proton acceptor in the catalytic mechanism. Lys127 lines the substrate pocket.

The protein belongs to the ribose 5-phosphate isomerase family. Homodimer.

The enzyme catalyses aldehydo-D-ribose 5-phosphate = D-ribulose 5-phosphate. Its pathway is carbohydrate degradation; pentose phosphate pathway; D-ribose 5-phosphate from D-ribulose 5-phosphate (non-oxidative stage): step 1/1. Its function is as follows. Catalyzes the reversible conversion of ribose-5-phosphate to ribulose 5-phosphate. The chain is Ribose-5-phosphate isomerase A from Synechococcus sp. (strain RCC307).